The chain runs to 624 residues: Glutamine--fructose-6-phosphate aminotransferase [isomerizing] (624 aa).

Cysteine 2 serves as the catalytic Nucleophile; for GATase activity. The Glutamine amidotransferase type-2 domain maps to 2–226; the sequence is CGIVGYVGQQ…QDQAVVLTAD (225 aa). SIS domains follow at residues 297 to 436 and 469 to 614; these read SDQE…ARGT and LAQR…VDKP. The active-site For Fru-6P isomerization activity is the lysine 619.

In terms of assembly, homodimer.

It is found in the cytoplasm. The catalysed reaction is D-fructose 6-phosphate + L-glutamine = D-glucosamine 6-phosphate + L-glutamate. In terms of biological role, catalyzes the first step in hexosamine metabolism, converting fructose-6P into glucosamine-6P using glutamine as a nitrogen source. The protein is Glutamine--fructose-6-phosphate aminotransferase [isomerizing] of Mycolicibacterium paratuberculosis (strain ATCC BAA-968 / K-10) (Mycobacterium paratuberculosis).